We begin with the raw amino-acid sequence, 95 residues long: Putative pterin-4-alpha-carbinolamine dehydratase (95 aa).

It belongs to the pterin-4-alpha-carbinolamine dehydratase family.

It carries out the reaction (4aS,6R)-4a-hydroxy-L-erythro-5,6,7,8-tetrahydrobiopterin = (6R)-L-erythro-6,7-dihydrobiopterin + H2O. In Thermosynechococcus vestitus (strain NIES-2133 / IAM M-273 / BP-1), this protein is Putative pterin-4-alpha-carbinolamine dehydratase.